A 123-amino-acid polypeptide reads, in one-letter code: Small ribosomal subunit protein uS12 (123 aa).

Positions 11 to 32 are disordered; sequence PRQEKTYREKARHLGASPQKRG. Asp89 is subject to 3-methylthioaspartic acid.

This sequence belongs to the universal ribosomal protein uS12 family. In terms of assembly, part of the 30S ribosomal subunit. Contacts proteins S8 and S17. May interact with IF1 in the 30S initiation complex.

Functionally, with S4 and S5 plays an important role in translational accuracy. Its function is as follows. Interacts with and stabilizes bases of the 16S rRNA that are involved in tRNA selection in the A site and with the mRNA backbone. Located at the interface of the 30S and 50S subunits, it traverses the body of the 30S subunit contacting proteins on the other side and probably holding the rRNA structure together. The combined cluster of proteins S8, S12 and S17 appears to hold together the shoulder and platform of the 30S subunit. This chain is Small ribosomal subunit protein uS12, found in Methylocella silvestris (strain DSM 15510 / CIP 108128 / LMG 27833 / NCIMB 13906 / BL2).